The chain runs to 140 residues: Small ribosomal subunit protein uS19 (140 aa).

Residues 55–74 are disordered; it reads LAEARESGTEETANNPIRTH.

Belongs to the universal ribosomal protein uS19 family.

In terms of biological role, protein S19 forms a complex with S13 that binds strongly to the 16S ribosomal RNA. The sequence is that of Small ribosomal subunit protein uS19 from Halobacterium salinarum (strain ATCC 29341 / DSM 671 / R1).